Here is a 541-residue protein sequence, read N- to C-terminus: Mesoderm induction early response protein 2 (541 aa).

Serine 11 is subject to Phosphoserine. Disordered regions lie at residues 100-119 and 131-186; these read DPIS…LPDM and LSGE…EEDA. Residues 140 to 165 are compositionally biased toward polar residues; the sequence is QSSADDLTPSVTSHEASDLFHNQSGS. The region spanning 194-291 is the ELM2 domain; it reads KEIMVGPQFQ…EALRRLRFNV (98 aa). In terms of domain architecture, SANT spans 296–348; sequence DGLCAWSEEECRNFEHGFRVHGKNFHLIQANKVRTRSVGECVEYYYLWKKSER. Residues 364 to 440 are disordered; sequence VSSGTTDTEQ…EPPAVPSLQQ (77 aa).

In terms of assembly, part of a complex containing at least CDYL, MIER1, MIER2, HDAC1 and HDAC2.

The protein resides in the nucleus. Its function is as follows. Transcriptional repressor. The chain is Mesoderm induction early response protein 2 (Mier2) from Mus musculus (Mouse).